The chain runs to 171 residues: Adenine phosphoribosyltransferase (171 aa).

It belongs to the purine/pyrimidine phosphoribosyltransferase family. Homodimer.

It is found in the cytoplasm. It catalyses the reaction AMP + diphosphate = 5-phospho-alpha-D-ribose 1-diphosphate + adenine. It participates in purine metabolism; AMP biosynthesis via salvage pathway; AMP from adenine: step 1/1. In terms of biological role, catalyzes a salvage reaction resulting in the formation of AMP, that is energically less costly than de novo synthesis. The chain is Adenine phosphoribosyltransferase from Acidiphilium cryptum (strain JF-5).